The sequence spans 60 residues: Large ribosomal subunit protein bL32 (60 aa).

Residues 1-60 (MAVQQNKKSRSARDMRRSHDALEPNALSVEKSTGEVHLRHHVSPDGFYRGRKVIDKGADE) form a disordered region. The span at 11 to 22 (SARDMRRSHDAL) shows a compositional bias: basic and acidic residues.

This sequence belongs to the bacterial ribosomal protein bL32 family.

In Stutzerimonas stutzeri (strain A1501) (Pseudomonas stutzeri), this protein is Large ribosomal subunit protein bL32.